We begin with the raw amino-acid sequence, 431 residues long: NADH-quinone oxidoreductase chain 1 (431 aa).

Residue 54–63 (GRGGAGFPTG) participates in NAD(+) binding. Position 167–214 (167–214 (GAGAYICGEETALLESLEGKKGMPRMKPPFPAGAGLYGCPTTVNNVES)) interacts with FMN. [4Fe-4S] cluster contacts are provided by cysteine 346, cysteine 349, cysteine 352, and cysteine 392.

This sequence belongs to the complex I 51 kDa subunit family. As to quaternary structure, NDH-1 is composed of at least 14 different subunits, Nqo1 to Nqo14. The complex has a L-shaped structure, with the hydrophobic arm (subunits Nqo7, Nqo8, Nqo10 to Nqo14) embedded in the inner membrane and the hydrophilic peripheral arm (subunits Nqo1 to Nqo6, Nqo9) protruding into the bacterial cytoplasm. The hydrophilic domain contains all the redox centers. FMN serves as cofactor. It depends on [4Fe-4S] cluster as a cofactor.

Its subcellular location is the cell inner membrane. It catalyses the reaction a quinone + NADH + 5 H(+)(in) = a quinol + NAD(+) + 4 H(+)(out). In terms of biological role, NDH-1 shuttles electrons from NADH, via FMN and iron-sulfur (Fe-S) centers, to quinones in the respiratory chain. The immediate electron acceptor for the enzyme in this species is believed to be ubiquinone. Couples the redox reaction to proton translocation (for every two electrons transferred, four hydrogen ions are translocated across the cytoplasmic membrane), and thus conserves the redox energy in a proton gradient. This chain is NADH-quinone oxidoreductase chain 1 (nqo1), found in Paracoccus denitrificans.